Here is a 453-residue protein sequence, read N- to C-terminus: Homogentisate 1,2-dioxygenase (453 aa).

H306 (proton acceptor) is an active-site residue. Fe cation contacts are provided by H349 and E355. Y364 and H385 together coordinate homogentisate. H385 provides a ligand contact to Fe cation.

This sequence belongs to the homogentisate dioxygenase family. Hexamer; dimer of trimers. Fe cation is required as a cofactor.

It carries out the reaction homogentisate + O2 = 4-maleylacetoacetate + H(+). It participates in amino-acid degradation; L-phenylalanine degradation; acetoacetate and fumarate from L-phenylalanine: step 4/6. Its function is as follows. Involved in the catabolism of homogentisate (2,5-dihydroxyphenylacetate or 2,5-OH-PhAc), a central intermediate in the degradation of phenylalanine and tyrosine. Catalyzes the oxidative ring cleavage of the aromatic ring of homogentisate to yield maleylacetoacetate. In Rhizobium etli (strain ATCC 51251 / DSM 11541 / JCM 21823 / NBRC 15573 / CFN 42), this protein is Homogentisate 1,2-dioxygenase.